The following is a 281-amino-acid chain: GPN-loop GTPase 3 (281 aa).

Residue 13–18 (GSGKST) coordinates GTP. Residues 70–72 (GPN) carry the Gly-Pro-Asn (GPN)-loop; involved in dimer interface motif. 173–176 (SKMD) lines the GTP pocket. The interval 259 to 281 (VQYGEDEEPKEPKDMDEGDFTAQ) is disordered.

This sequence belongs to the GPN-loop GTPase family. Heterodimers with GPN1 or GPN2. Binds to RNA polymerase II (RNAPII).

Small GTPase required for proper nuclear import of RNA polymerase II and III (RNAPII and RNAPIII). May act at an RNAP assembly step prior to nuclear import. In Mycosarcoma maydis (Corn smut fungus), this protein is GPN-loop GTPase 3.